A 413-amino-acid chain; its full sequence is Zinc finger CCCH domain-containing protein 6 (413 aa).

3 disordered regions span residues 28 to 61 (PSQV…FGGP), 159 to 191 (DSAS…TLPA), and 333 to 356 (QPGG…RDSK). Residues 176–189 (PSITDENTSTSSTL) are compositionally biased toward polar residues. Residues 357 to 385 (PKIMKACMYFNSARGCRHGANCMYQHDAT) form a C3H1-type zinc finger. The span at 389–403 (PRNLNNGNINTSDMQ) shows a compositional bias: polar residues. The interval 389–413 (PRNLNNGNINTSDMQNAKRMRFDRD) is disordered.

The polypeptide is Zinc finger CCCH domain-containing protein 6 (Arabidopsis thaliana (Mouse-ear cress)).